Reading from the N-terminus, the 345-residue chain is Delta(1)-pyrroline-2-carboxylate reductase (345 aa).

Catalysis depends on Ser-47, which acts as the Charge relay system. His-48 (proton donor) is an active-site residue. Arg-52 is a binding site for substrate. Residue 121–125 participates in NADP(+) binding; that stretch reads HFSAL. Residue Thr-161 coordinates substrate. Residue 179–181 participates in NADP(+) binding; the sequence is DFA. Residue 187-188 coordinates substrate; it reads RG. The active-site Charge relay system is Glu-189. Residues 230 to 231 and 305 to 311 contribute to the NADP(+) site; these read HK and RLPSGRR.

This sequence belongs to the LDH2/MDH2 oxidoreductase family. In terms of assembly, homodimer.

It carries out the reaction L-proline + NAD(+) = 1-pyrroline-2-carboxylate + NADH + H(+). It catalyses the reaction L-proline + NADP(+) = 1-pyrroline-2-carboxylate + NADPH + H(+). Catalyzes the reduction of Delta(1)-pyrroline-2-carboxylate (Pyr2C) to L-proline, using NADPH as the electron donor. Is likely involved in a degradation pathway that converts trans-3-hydroxy-L-proline (t3LHyp) to L-proline, which would allow A.tumefaciens to grow on t3LHyp as a sole carbon source. The polypeptide is Delta(1)-pyrroline-2-carboxylate reductase (Agrobacterium fabrum (strain C58 / ATCC 33970) (Agrobacterium tumefaciens (strain C58))).